A 288-amino-acid polypeptide reads, in one-letter code: MNSKRHLGHTARKRFGQNFLHDDNVIQGIVAAIYPQKGQFLVEIGPGLGALTEPVADQTDRLTVVELDRDLAQRLRHHPFLHQKLNVIETDAMQFDFGKLYEDEHLAEQGQKLRVFGNLPYNISTPLIFHLLKFYDKIQDMHFMLQKEVVKRLCAAPNSKAYGRLTIMTQYFCQVMPVLEVPPTAFKPAPKVDSAVVRLIPHKELPHPVKDLYWLNRVTSQAFNQRRKTLRNALSTLFTPEQLTALNIDLTARAENLSIADYARLANWLADNPPADVRRDEIIEENEE.

Positions 18, 20, 45, 66, 91, and 118 each coordinate S-adenosyl-L-methionine.

Belongs to the class I-like SAM-binding methyltransferase superfamily. rRNA adenine N(6)-methyltransferase family. RsmA subfamily.

It localises to the cytoplasm. It carries out the reaction adenosine(1518)/adenosine(1519) in 16S rRNA + 4 S-adenosyl-L-methionine = N(6)-dimethyladenosine(1518)/N(6)-dimethyladenosine(1519) in 16S rRNA + 4 S-adenosyl-L-homocysteine + 4 H(+). In terms of biological role, specifically dimethylates two adjacent adenosines (A1518 and A1519) in the loop of a conserved hairpin near the 3'-end of 16S rRNA in the 30S particle. May play a critical role in biogenesis of 30S subunits. The polypeptide is Ribosomal RNA small subunit methyltransferase A (Mannheimia succiniciproducens (strain KCTC 0769BP / MBEL55E)).